Reading from the N-terminus, the 492-residue chain is 1-aminocyclopropane-1-carboxylate synthase 1 (492 aa).

N6-(pyridoxal phosphate)lysine is present on K277.

This sequence belongs to the class-I pyridoxal-phosphate-dependent aminotransferase family. Homodimer. The cofactor is pyridoxal 5'-phosphate.

It catalyses the reaction S-adenosyl-L-methionine = 1-aminocyclopropane-1-carboxylate + S-methyl-5'-thioadenosine + H(+). Its pathway is alkene biosynthesis; ethylene biosynthesis via S-adenosyl-L-methionine; ethylene from S-adenosyl-L-methionine: step 1/2. In terms of biological role, catalyzes the formation of 1-aminocyclopropane-1-carboxylate, a direct precursor of ethylene in higher plants. The polypeptide is 1-aminocyclopropane-1-carboxylate synthase 1 (ACS1) (Prunus mume (Japanese apricot)).